The following is a 57-amino-acid chain: Large ribosomal subunit protein bL32 (57 aa).

The protein belongs to the bacterial ribosomal protein bL32 family.

The protein is Large ribosomal subunit protein bL32 of Streptomyces avermitilis (strain ATCC 31267 / DSM 46492 / JCM 5070 / NBRC 14893 / NCIMB 12804 / NRRL 8165 / MA-4680).